Reading from the N-terminus, the 688-residue chain is Potassium-transporting ATPase ATP-binding subunit (688 aa).

Helical transmembrane passes span 34–54 (PVMF…LAIL), 62–82 (ALFT…ANFA), 219–239 (VALT…TATL), and 260–280 (VLVA…LSAI). Residue Asp313 is the 4-aspartylphosphate intermediate of the active site. Residues Asp350, Glu354, 383-390 (FSAQTRMS), and Lys401 contribute to the ATP site. Residues Asp524 and Asp528 each coordinate Mg(2+). A run of 3 helical transmembrane segments spans residues 594 to 614 (FAII…LNVM), 622 to 642 (AILS…PLAL), and 667 to 687 (GLLV…ALIM).

It belongs to the cation transport ATPase (P-type) (TC 3.A.3) family. Type IA subfamily. In terms of assembly, the system is composed of three essential subunits: KdpA, KdpB and KdpC.

The protein resides in the cell inner membrane. The catalysed reaction is K(+)(out) + ATP + H2O = K(+)(in) + ADP + phosphate + H(+). Part of the high-affinity ATP-driven potassium transport (or Kdp) system, which catalyzes the hydrolysis of ATP coupled with the electrogenic transport of potassium into the cytoplasm. This subunit is responsible for energy coupling to the transport system and for the release of the potassium ions to the cytoplasm. The chain is Potassium-transporting ATPase ATP-binding subunit from Yersinia enterocolitica serotype O:8 / biotype 1B (strain NCTC 13174 / 8081).